Here is a 201-residue protein sequence, read N- to C-terminus: Phosphoprotein (201 aa).

The segment at 1 to 70 (MATRPSSLVD…DQRTGREQLS (70 aa)) is disordered. Short sequence motifs (nuclear localization signal) lie at residues 29–36 (PRPRKIPR) and 181–193 (PPRI…SAPT).

In terms of assembly, homomultimer; only active in its oligomeric state. Interacts with nucleoprotein/N. Interacts with matrix/M protein. Interacts with host TBK1. Interacts with polymerase L. Interacts with host HMGB1; this interaction is required to stabilize RNP on chromosomes. Phosphorylated by host PKC epsilon and casein kinase II.

The protein localises to the host nucleus. Its subcellular location is the host cytoplasm. Its function is as follows. Essential component of the RNA polymerase transcription and replication complex. Acts as a scaffold which brings L in close proximity to the N-RNA complex. Plays a role in the segregation of the viral genome in host daughter cells during mitosis by interacting with host HMGB1, a host chromatin-remodeling DNA architectural protein, thereby stabilizing RNP on chromosomes. Interacts with host TBK1 and thus interferes with activation of cellular antiviral state. Inhibits cellular histone acetyltransferase activities. The chain is Phosphoprotein (P/X) from Bos taurus (Bovine).